A 252-amino-acid chain; its full sequence is Ubiquinone/menaquinone biosynthesis C-methyltransferase UbiE (252 aa).

S-adenosyl-L-methionine contacts are provided by residues Thr-71, Asp-100, 124–125 (DA), and Ser-141.

Belongs to the class I-like SAM-binding methyltransferase superfamily. MenG/UbiE family.

The enzyme catalyses a 2-demethylmenaquinol + S-adenosyl-L-methionine = a menaquinol + S-adenosyl-L-homocysteine + H(+). It catalyses the reaction a 2-methoxy-6-(all-trans-polyprenyl)benzene-1,4-diol + S-adenosyl-L-methionine = a 5-methoxy-2-methyl-3-(all-trans-polyprenyl)benzene-1,4-diol + S-adenosyl-L-homocysteine + H(+). The protein operates within quinol/quinone metabolism; menaquinone biosynthesis; menaquinol from 1,4-dihydroxy-2-naphthoate: step 2/2. Its pathway is cofactor biosynthesis; ubiquinone biosynthesis. Methyltransferase required for the conversion of demethylmenaquinol (DMKH2) to menaquinol (MKH2) and the conversion of 2-polyprenyl-6-methoxy-1,4-benzoquinol (DDMQH2) to 2-polyprenyl-3-methyl-6-methoxy-1,4-benzoquinol (DMQH2). This chain is Ubiquinone/menaquinone biosynthesis C-methyltransferase UbiE, found in Caulobacter sp. (strain K31).